We begin with the raw amino-acid sequence, 2325 residues long: Serine/threonine-protein kinase MEC1 (2325 aa).

One can recognise an FAT domain in the interval 1363–1886 (LLTTRSAECD…VWYIFSHARS (524 aa)). Positions 1993 to 2309 (FDDNVNIFFS…QVDVLIQEAT (317 aa)) constitute a PI3K/PI4K catalytic domain. The tract at residues 1999 to 2005 (IFFSLQM) is G-loop. Residues 2174–2182 (GLGDRHCEN) are catalytic loop. The interval 2194 to 2218 (HIDFDCLFEKGTTLPTPEIVPFRLT) is activation loop. An FATC domain is found at 2293-2325 (LPMNIHGQVDVLIQEATSLERLSQMYAGWAAYM).

This sequence belongs to the PI3/PI4-kinase family. ATM subfamily.

It localises to the nucleus. The catalysed reaction is L-seryl-[protein] + ATP = O-phospho-L-seryl-[protein] + ADP + H(+). It carries out the reaction L-threonyl-[protein] + ATP = O-phospho-L-threonyl-[protein] + ADP + H(+). In terms of biological role, serine/threonine protein kinase which activates checkpoint signaling upon genotoxic stresses such as ionizing radiation (IR), ultraviolet light (UV), or DNA replication stalling, thereby acting as a DNA damage sensor. Recognizes the substrate consensus sequence [ST]-Q. Recruited to DNA lesions in order to initiate the DNA repair by homologous recombination. Phosphorylates histone H2A to form H2AS128ph (gamma-H2A) at sites of DNA damage, also involved in the regulation of DNA damage response mechanism. Required for cell growth and meiotic recombination. This chain is Serine/threonine-protein kinase MEC1 (MEC1), found in Candida albicans (strain SC5314 / ATCC MYA-2876) (Yeast).